Here is a 213-residue protein sequence, read N- to C-terminus: Bcl-2-related ovarian killer protein (213 aa).

Residues 32 to 44 carry the BH4 motif; that stretch reads KALCRDYINSRLI. Residues 67–83 carry the BH3 motif; the sequence is VSAILLRLGDELEYIRP. Positions 113–132 match the BH1 motif; sequence QIFTAGITWGKVVSLYAVAA. A BH2 motif is present at residues 165–179; that stretch reads WLKRRGGWADITKCV. A helical membrane pass occupies residues 190 to 210; that stretch reads WLVAAVCSFGHFLKAIFFVLL.

This sequence belongs to the Bcl-2 family.

The protein resides in the membrane. May play a role in apoptosis. The polypeptide is Bcl-2-related ovarian killer protein (Gallus gallus (Chicken)).